Reading from the N-terminus, the 146-residue chain is Hemoglobin subunit beta (146 aa).

The region spanning 2-146 (HWTAEEKQLI…VAHALARKYH (145 aa)) is the Globin domain. Residues His-63 and His-92 each coordinate heme b.

Belongs to the globin family. As to quaternary structure, heterotetramer of two alpha chains and two beta chains. In terms of tissue distribution, red blood cells.

In terms of biological role, involved in oxygen transport from the lung to the various peripheral tissues. In Ara ararauna (Blue-and-yellow macaw), this protein is Hemoglobin subunit beta (HBB).